Consider the following 79-residue polypeptide: Apolipoprotein C-II (79 aa).

The N-terminal stretch at 1–21 is a signal peptide; the sequence is MDLKVVAVSFLLLVLCSEAAG. The segment at 45 to 52 is lipid binding; sequence GVEKLRDI. The lipoprotein lipase cofactor stretch occupies residues 56 to 79; the sequence is SVDAVGTYTSILTDQLYHWWCGEQ.

Belongs to the apolipoprotein C2 family. Post-translationally, proapolipoprotein C-II is synthesized as a sialic acid containing glycoprotein which is subsequently desialylated prior to its proteolytic processing. In terms of processing, proapolipoprotein C-II, the major form found in plasma undergoes proteolytic cleavage of its N-terminal hexapeptide to generate apolipoprotein C-II, which occurs as the minor form in plasma.

The protein resides in the secreted. In terms of biological role, component of chylomicrons, very low-density lipoproteins (VLDL), low-density lipoproteins (LDL), and high-density lipoproteins (HDL) in plasma. Plays an important role in lipoprotein metabolism as an activator of lipoprotein lipase. Both proapolipoprotein C-II and apolipoprotein C-II can activate lipoprotein lipase. This chain is Apolipoprotein C-II (APOC2), found in Alligator mississippiensis (American alligator).